The primary structure comprises 145 residues: MSIQDVKNYLPHRYPFLLIDRVLELEIGKSIVALKNVTFNEPQFTGHFPEQPIMPGVMIVEALAQATGILAFKSEAGKPIDGQIYMLVGIDKVRFKRMVEPGDQLRLEVEVITIKRGIWKFKCKATVDNQIITSAELMCTQRTAG.

Residue H47 is part of the active site.

The protein belongs to the thioester dehydratase family. FabZ subfamily.

It is found in the cytoplasm. The enzyme catalyses a (3R)-hydroxyacyl-[ACP] = a (2E)-enoyl-[ACP] + H2O. In terms of biological role, involved in unsaturated fatty acids biosynthesis. Catalyzes the dehydration of short chain beta-hydroxyacyl-ACPs and long chain saturated and unsaturated beta-hydroxyacyl-ACPs. This Ruthia magnifica subsp. Calyptogena magnifica protein is 3-hydroxyacyl-[acyl-carrier-protein] dehydratase FabZ.